Reading from the N-terminus, the 724-residue chain is Protein Aster-A (724 aa).

The span at 1 to 18 (MFDTTPHSGRSTPSSSPS) shows a compositional bias: low complexity. Positions 1–66 (MFDTTPHSGR…TPSTQSLGSR (66 aa)) are disordered. Polar residues predominate over residues 57–66 (TPSTQSLGSR). A GRAM domain is found at 91–158 (EDFRKLFSKL…KEVTCLKKEK (68 aa)). The tract at residues 256–336 (SSGAADRSQE…GPTTLGPLDL (81 aa)) is disordered. Ser263, Ser267, and Ser271 each carry phosphoserine. Positions 300 to 312 (DSQPDASSSQTVT) are enriched in polar residues. The segment covering 326–336 (DGPTTLGPLDL) has biased composition (low complexity). One can recognise a VASt domain in the interval 367 to 538 (SGRLLINSVF…ELAKAEKLSL (172 aa)). A Phosphoserine modification is found at Ser415. Positions 560–579 (SWRAHGDGPQHPDPDPCARA) are disordered. Residues 563-575 (AHGDGPQHPDPDP) are compositionally biased toward basic and acidic residues. The helical transmembrane segment at 610–630 (LISIVICVSLIILIALNVLLF) threads the bilayer.

In terms of tissue distribution, expressed in liver.

Its subcellular location is the endoplasmic reticulum membrane. The protein localises to the cell membrane. It is found in the cytoplasmic vesicle. It localises to the autophagosome. Its function is as follows. Cholesterol transporter that mediates non-vesicular transport of cholesterol from the plasma membrane (PM) to the endoplasmic reticulum (ER). Contains unique domains for binding cholesterol and the PM, thereby serving as a molecular bridge for the transfer of cholesterol from the PM to the ER. Plays a crucial role in cholesterol homeostasis and has the unique ability to localize to the PM based on the level of membrane cholesterol. In lipid-poor conditions localizes to the ER membrane and in response to excess cholesterol in the PM is recruited to the endoplasmic reticulum-plasma membrane contact sites (EPCS) which is mediated by the GRAM domain. At the EPCS, the sterol-binding VASt/ASTER domain binds to the cholesterol in the PM and facilitates its transfer from the PM to ER. May play a role in tumor progression. Plays a role in autophagy regulation and is required for biogenesis of the autophagosome. This function in autophagy requires its cholesterol-transfer activity. This chain is Protein Aster-A, found in Homo sapiens (Human).